Reading from the N-terminus, the 131-residue chain is Probable ATP synthase subunit g 1, mitochondrial (131 aa).

This sequence belongs to the ATPase g subunit family. In terms of assembly, subunit of the F-type ATPase which has 2 components, CF(1) - the catalytic core - and CF(0) - the membrane proton channel.

It localises to the mitochondrion membrane. In terms of biological role, mitochondrial membrane ATP synthase (F(1)F(0) ATP synthase or Complex V) produces ATP from ADP in the presence of a proton gradient across the membrane which is generated by electron transport complexes of the respiratory chain. F-type ATPases consist of two structural domains, F(1) - containing the extramembraneous catalytic core, and F(0) - containing the membrane proton channel, linked together by a central stalk and a peripheral stalk. During catalysis, ATP synthesis in the catalytic domain of F(1) is coupled via a rotary mechanism of the central stalk subunits to proton translocation. Part of the complex F(0) domain. Minor subunit located with subunit a in the membrane. This is Probable ATP synthase subunit g 1, mitochondrial from Caenorhabditis elegans.